A 601-amino-acid polypeptide reads, in one-letter code: Glutathione-regulated potassium-efflux system protein KefB (601 aa).

Helical transmembrane passes span 4–24 (SDFL…VPLA), 29–49 (IGAV…GLGF), 55–75 (EILH…GLEL), 87–107 (IFGV…GLLM), 115–135 (AAVV…LQLM), 152–172 (VLLF…LLAG), 177–197 (HFDW…LIGG), 207–227 (FIAA…LVLG), 230–250 (LFMD…GVLL), 268–288 (GLLL…GVLY), 291–311 (LLWV…VLYL), 324–344 (MQFA…FSTA), and 356–376 (ALLL…MKLV). Residues 400-519 (KPQVIVVGFG…AGVTQFSRET (120 aa)) form the RCK N-terminal domain.

This sequence belongs to the monovalent cation:proton antiporter 2 (CPA2) transporter (TC 2.A.37) family. KefB subfamily. As to quaternary structure, interacts with the regulatory subunit KefG.

The protein localises to the cell inner membrane. Its function is as follows. Pore-forming subunit of a potassium efflux system that confers protection against electrophiles. Catalyzes K(+)/H(+) antiport. This chain is Glutathione-regulated potassium-efflux system protein KefB, found in Escherichia coli (strain ATCC 8739 / DSM 1576 / NBRC 3972 / NCIMB 8545 / WDCM 00012 / Crooks).